The chain runs to 91 residues: Small ribosomal subunit protein uS17 (91 aa).

Belongs to the universal ribosomal protein uS17 family. In terms of assembly, part of the 30S ribosomal subunit.

Functionally, one of the primary rRNA binding proteins, it binds specifically to the 5'-end of 16S ribosomal RNA. The protein is Small ribosomal subunit protein uS17 of Saccharopolyspora erythraea (strain ATCC 11635 / DSM 40517 / JCM 4748 / NBRC 13426 / NCIMB 8594 / NRRL 2338).